A 332-amino-acid polypeptide reads, in one-letter code: Glycerol-3-phosphate dehydrogenase [NAD(P)+] (332 aa).

Trp-11, Arg-30, and Lys-108 together coordinate NADPH. Sn-glycerol 3-phosphate contacts are provided by Lys-108, Gly-137, and Ser-139. Ala-141 provides a ligand contact to NADPH. Sn-glycerol 3-phosphate-binding residues include Lys-192, Asp-245, Ser-255, Arg-256, and Asn-257. Lys-192 (proton acceptor) is an active-site residue. An NADPH-binding site is contributed by Arg-256. Residues Val-280 and Glu-282 each contribute to the NADPH site.

Belongs to the NAD-dependent glycerol-3-phosphate dehydrogenase family.

It localises to the cytoplasm. The enzyme catalyses sn-glycerol 3-phosphate + NAD(+) = dihydroxyacetone phosphate + NADH + H(+). The catalysed reaction is sn-glycerol 3-phosphate + NADP(+) = dihydroxyacetone phosphate + NADPH + H(+). It functions in the pathway membrane lipid metabolism; glycerophospholipid metabolism. Functionally, catalyzes the reduction of the glycolytic intermediate dihydroxyacetone phosphate (DHAP) to sn-glycerol 3-phosphate (G3P), the key precursor for phospholipid synthesis. In Burkholderia lata (strain ATCC 17760 / DSM 23089 / LMG 22485 / NCIMB 9086 / R18194 / 383), this protein is Glycerol-3-phosphate dehydrogenase [NAD(P)+].